Consider the following 389-residue polypeptide: Phospho-N-acetylmuramoyl-pentapeptide-transferase (389 aa).

10 helical membrane-spanning segments follow: residues 21–41, 70–90, 97–117, 134–154, 189–209, 222–242, 259–279, 286–306, 311–331, and 366–386; these read FITF…LFFG, GTPT…TLLW, FVWV…VDDY, YMWQ…SVSA, TISY…VIVG, GLAI…AYLT, AGEL…FLWF, VFMG…IAVI, IVLF…MIQV, and QVVV…LSTL.

It belongs to the glycosyltransferase 4 family. MraY subfamily. Mg(2+) serves as cofactor.

It is found in the cell inner membrane. It carries out the reaction UDP-N-acetyl-alpha-D-muramoyl-L-alanyl-gamma-D-glutamyl-meso-2,6-diaminopimeloyl-D-alanyl-D-alanine + di-trans,octa-cis-undecaprenyl phosphate = di-trans,octa-cis-undecaprenyl diphospho-N-acetyl-alpha-D-muramoyl-L-alanyl-D-glutamyl-meso-2,6-diaminopimeloyl-D-alanyl-D-alanine + UMP. The protein operates within cell wall biogenesis; peptidoglycan biosynthesis. In terms of biological role, catalyzes the initial step of the lipid cycle reactions in the biosynthesis of the cell wall peptidoglycan: transfers peptidoglycan precursor phospho-MurNAc-pentapeptide from UDP-MurNAc-pentapeptide onto the lipid carrier undecaprenyl phosphate, yielding undecaprenyl-pyrophosphoryl-MurNAc-pentapeptide, known as lipid I. The polypeptide is Phospho-N-acetylmuramoyl-pentapeptide-transferase (Herminiimonas arsenicoxydans).